The chain runs to 178 residues: Small ribosomal subunit protein uS5 (178 aa).

An S5 DRBM domain is found at 17–80; it reads FEERIVEIRR…AAARASVVEI (64 aa).

The protein belongs to the universal ribosomal protein uS5 family. In terms of assembly, part of the 30S ribosomal subunit. Contacts proteins S4 and S8.

In terms of biological role, with S4 and S12 plays an important role in translational accuracy. Located at the back of the 30S subunit body where it stabilizes the conformation of the head with respect to the body. This is Small ribosomal subunit protein uS5 from Pseudothermotoga lettingae (strain ATCC BAA-301 / DSM 14385 / NBRC 107922 / TMO) (Thermotoga lettingae).